We begin with the raw amino-acid sequence, 399 residues long: Acetate kinase (399 aa).

Position 7 (asparagine 7) interacts with Mg(2+). An ATP-binding site is contributed by lysine 14. Arginine 91 is a substrate binding site. Aspartate 148 functions as the Proton donor/acceptor in the catalytic mechanism. ATP contacts are provided by residues 208–212, 283–285, and 331–335; these read HLGNG, DFR, and GIGEN. Position 384 (glutamate 384) interacts with Mg(2+).

The protein belongs to the acetokinase family. As to quaternary structure, homodimer. The cofactor is Mg(2+). Mn(2+) is required as a cofactor.

It is found in the cytoplasm. It catalyses the reaction acetate + ATP = acetyl phosphate + ADP. It functions in the pathway metabolic intermediate biosynthesis; acetyl-CoA biosynthesis; acetyl-CoA from acetate: step 1/2. Catalyzes the formation of acetyl phosphate from acetate and ATP. Can also catalyze the reverse reaction. This Acetivibrio thermocellus (strain ATCC 27405 / DSM 1237 / JCM 9322 / NBRC 103400 / NCIMB 10682 / NRRL B-4536 / VPI 7372) (Clostridium thermocellum) protein is Acetate kinase.